A 398-amino-acid polypeptide reads, in one-letter code: Tryptophan synthase beta chain (398 aa).

Lys-88 is modified (N6-(pyridoxal phosphate)lysine).

Belongs to the TrpB family. In terms of assembly, tetramer of two alpha and two beta chains. It depends on pyridoxal 5'-phosphate as a cofactor.

It carries out the reaction (1S,2R)-1-C-(indol-3-yl)glycerol 3-phosphate + L-serine = D-glyceraldehyde 3-phosphate + L-tryptophan + H2O. Its pathway is amino-acid biosynthesis; L-tryptophan biosynthesis; L-tryptophan from chorismate: step 5/5. In terms of biological role, the beta subunit is responsible for the synthesis of L-tryptophan from indole and L-serine. This chain is Tryptophan synthase beta chain, found in Haemophilus influenzae (strain PittGG).